We begin with the raw amino-acid sequence, 141 residues long: Large ribosomal subunit protein uL22c (141 aa).

Belongs to the universal ribosomal protein uL22 family. In terms of assembly, part of the 50S ribosomal subunit.

The protein localises to the plastid. It localises to the chloroplast. Functionally, this protein binds specifically to 23S rRNA. In terms of biological role, the globular domain of the protein is located near the polypeptide exit tunnel on the outside of the subunit, while an extended beta-hairpin is found that lines the wall of the exit tunnel in the center of the 70S ribosome. This Chloranthus spicatus (Chulantree) protein is Large ribosomal subunit protein uL22c (rpl22).